We begin with the raw amino-acid sequence, 214 residues long: Pyrrolidone-carboxylate peptidase 2 (214 aa).

Residues Glu-78, Cys-141, and His-165 contribute to the active site.

Belongs to the peptidase C15 family. Homotetramer.

It localises to the cytoplasm. The catalysed reaction is Release of an N-terminal pyroglutamyl group from a polypeptide, the second amino acid generally not being Pro.. Functionally, removes 5-oxoproline from various penultimate amino acid residues except L-proline. The chain is Pyrrolidone-carboxylate peptidase 2 from Streptococcus pneumoniae serotype 4 (strain ATCC BAA-334 / TIGR4).